A 256-amino-acid chain; its full sequence is UPF0246 protein TERTU_4575 (256 aa).

It belongs to the UPF0246 family.

This is UPF0246 protein TERTU_4575 from Teredinibacter turnerae (strain ATCC 39867 / T7901).